A 956-amino-acid polypeptide reads, in one-letter code: Valine--tRNA ligase (956 aa).

A 'HIGH' region motif is present at residues 69-79 (PNITGVLHMGH). A 'KMSKS' region motif is present at residues 566 to 570 (KMSKS). Lys569 is an ATP binding site. The stretch at 885–911 (LCARLQKAWQKARQKVQQVERKLADAQ) forms a coiled coil.

It belongs to the class-I aminoacyl-tRNA synthetase family. ValS type 1 subfamily. As to quaternary structure, monomer.

It localises to the cytoplasm. It carries out the reaction tRNA(Val) + L-valine + ATP = L-valyl-tRNA(Val) + AMP + diphosphate. Catalyzes the attachment of valine to tRNA(Val). As ValRS can inadvertently accommodate and process structurally similar amino acids such as threonine, to avoid such errors, it has a 'posttransfer' editing activity that hydrolyzes mischarged Thr-tRNA(Val) in a tRNA-dependent manner. The chain is Valine--tRNA ligase from Treponema pallidum (strain Nichols).